The primary structure comprises 480 residues: Protein nucleotidyltransferase YdiU (480 aa).

G86, G88, R89, K109, D121, G122, R172, and R179 together coordinate ATP. The Proton acceptor role is filled by D248. 2 residues coordinate Mg(2+): N249 and D258. D258 provides a ligand contact to ATP.

Belongs to the SELO family. The cofactor is Mg(2+). Mn(2+) is required as a cofactor.

The catalysed reaction is L-seryl-[protein] + ATP = 3-O-(5'-adenylyl)-L-seryl-[protein] + diphosphate. It catalyses the reaction L-threonyl-[protein] + ATP = 3-O-(5'-adenylyl)-L-threonyl-[protein] + diphosphate. The enzyme catalyses L-tyrosyl-[protein] + ATP = O-(5'-adenylyl)-L-tyrosyl-[protein] + diphosphate. It carries out the reaction L-histidyl-[protein] + UTP = N(tele)-(5'-uridylyl)-L-histidyl-[protein] + diphosphate. The catalysed reaction is L-seryl-[protein] + UTP = O-(5'-uridylyl)-L-seryl-[protein] + diphosphate. It catalyses the reaction L-tyrosyl-[protein] + UTP = O-(5'-uridylyl)-L-tyrosyl-[protein] + diphosphate. Nucleotidyltransferase involved in the post-translational modification of proteins. It can catalyze the addition of adenosine monophosphate (AMP) or uridine monophosphate (UMP) to a protein, resulting in modifications known as AMPylation and UMPylation. This chain is Protein nucleotidyltransferase YdiU, found in Salmonella arizonae (strain ATCC BAA-731 / CDC346-86 / RSK2980).